The primary structure comprises 138 residues: Large ribosomal subunit protein uL16 (138 aa).

The span at 1–16 (MLIPRKVAHRKQHHPG) shows a compositional bias: basic residues. The interval 1–24 (MLIPRKVAHRKQHHPGRTGAAKGG) is disordered.

This sequence belongs to the universal ribosomal protein uL16 family. As to quaternary structure, part of the 50S ribosomal subunit.

Its function is as follows. Binds 23S rRNA and is also seen to make contacts with the A and possibly P site tRNAs. The sequence is that of Large ribosomal subunit protein uL16 from Frankia alni (strain DSM 45986 / CECT 9034 / ACN14a).